The sequence spans 76 residues: Esculentin-2CG1 (76 aa).

Residues 1–22 form the signal peptide; sequence MFTMKKSMLLLFFLGTISLSLC. Residues 23–37 constitute a propeptide, removed in mature form; that stretch reads EEERSADEDDGEEEV. An intrachain disulfide couples C70 to C76.

In terms of tissue distribution, expressed by the skin glands.

The protein localises to the secreted. Its function is as follows. Antimicrobial peptide active against a variety of Gram-positive and some Gram-negative bacterial strains. Has antifungal activity against a slime mold isolate. Has hemolytic activity against human erythrocytes. In Amolops chunganensis (Chungan torrent frog), this protein is Esculentin-2CG1.